The following is a 152-amino-acid chain: CASP-like protein 5B3 (152 aa).

The Cytoplasmic segment spans residues 1–21 (MIDIPGTPGTLTGLVLRISQC). The next 2 membrane-spanning stretches (helical) occupy residues 22 to 42 (VFAAGSISYMVTSGGFFSFTA) and 43 to 63 (FCYLIAAMGLQVIWSFGLAIL). The Extracellular segment spans residues 64 to 77 (DTFALVRKKTLLSP). The chain crosses the membrane as a helical span at residues 78-98 (VLVSLFVVGDWVTSTLSLAGA). The Cytoplasmic portion of the chain corresponds to 99 to 127 (SSSAGITVLYFGDLGSCSFEAECWKYQLS). Residues 128–148 (VALAFLCWITIAVSSLTTLWL) traverse the membrane as a helical segment. Over 149–152 (LASA) the chain is Extracellular.

Belongs to the Casparian strip membrane proteins (CASP) family. In terms of assembly, homodimer and heterodimers. As to expression, expressed in the stele of the root and in leaves.

It localises to the cell membrane. In Arabidopsis thaliana (Mouse-ear cress), this protein is CASP-like protein 5B3.